Here is a 193-residue protein sequence, read N- to C-terminus: MNAIPYVVEQTKLGERSYDIYSRLLKDRIIIIGSEINDQVASSVVAQLLFLEAEDAEKDIFLYINSPGGSTTAGFAILDTMNLIKPDVQTLCMGFAASFGALLLLSGAKGKRFALPNSEIMIHQPLGGAKGQATEIEITAKRILKLKHDINKMIAEKTGQPIERVAHDTERDYFMTAEEAKAYGIVDDVVTKK.

Ser-98 serves as the catalytic Nucleophile. His-123 is a catalytic residue.

The protein belongs to the peptidase S14 family. In terms of assembly, fourteen ClpP subunits assemble into 2 heptameric rings which stack back to back to give a disk-like structure with a central cavity, resembling the structure of eukaryotic proteasomes.

It localises to the cytoplasm. The catalysed reaction is Hydrolysis of proteins to small peptides in the presence of ATP and magnesium. alpha-casein is the usual test substrate. In the absence of ATP, only oligopeptides shorter than five residues are hydrolyzed (such as succinyl-Leu-Tyr-|-NHMec, and Leu-Tyr-Leu-|-Tyr-Trp, in which cleavage of the -Tyr-|-Leu- and -Tyr-|-Trp bonds also occurs).. Functionally, cleaves peptides in various proteins in a process that requires ATP hydrolysis. Has a chymotrypsin-like activity. Plays a major role in the degradation of misfolded proteins. The sequence is that of ATP-dependent Clp protease proteolytic subunit 1 from Bacillus cereus (strain ZK / E33L).